A 1755-amino-acid polypeptide reads, in one-letter code: Transposon Ty1-GR1 Gag-Pol polyprotein (1755 aa).

Positions 1 to 16 are enriched in low complexity; it reads MESQQLSQHSHISHGS. Disordered stretches follow at residues 1 to 93, 126 to 173, and 352 to 421; these read MESQ…MMTQ, PQSQ…RPPP, and GSRN…SKST. 3 stretches are compositionally biased toward polar residues: residues 48–60, 71–93, and 127–152; these read TKAN…TPAS, SPQT…MMTQ, and QSQF…GNTF. The segment covering 153–165 has biased composition (low complexity); it reads TDSSSADSDMTST. Residues 299–401 form an RNA-binding region; sequence NNGIHINNKV…NSKSKTARAH (103 aa). A compositionally biased stretch (low complexity) spans 402-418; sequence NVSTSNNSPSTDNDSIS. S416 bears the Phosphoserine mark. D461 acts as the For protease activity; shared with dimeric partner in catalysis. The integrase-type zinc finger-like stretch occupies residues 583–640; sequence NVHTSESTRKYPYPFIHRMLAHANAQTIRYSLKNNTITYFNESDVDWSSAIDYQCPDC. The Integrase catalytic domain maps to 660 to 835; sequence NSYEPFQYLH…AGLDISTLLP (176 aa). D671 and D736 together coordinate Mg(2+). Disordered stretches follow at residues 956-1087, 1092-1111, and 1130-1187; these read SKAV…ETEK, RSPS…NIVP, and DLPL…DNET. Residues 960–969 are compositionally biased toward low complexity; it reads SPTDSTPPST. Over residues 1005–1015 the composition is skewed to polar residues; it reads STPQISNIEST. A compositionally biased stretch (basic and acidic residues) spans 1038 to 1053; the sequence is ESSHASKSKDFRHSDS. Polar residues-rich tracts occupy residues 1054–1082 and 1101–1111; these read YSEN…QISD and PENNSSHNIVP. A Bipartite nuclear localization signal motif is present at residues 1178–1212; that stretch reads KKRSLEDNETEIKVSRDTWNTKNMRSLEPPRSKKR. In terms of domain architecture, Reverse transcriptase Ty1/copia-type spans 1338–1476; that stretch reads NNYYITQLDI…DILGLEIKYQ (139 aa). Mg(2+) contacts are provided by D1346, D1427, D1428, D1610, E1652, and D1685. An RNase H Ty1/copia-type domain is found at 1610–1752; the sequence is DASYGNQPYY…IKTFKLLTNK (143 aa).

The capsid protein forms a homotrimer, from which the VLPs are assembled. The protease is a homodimer, whose active site consists of two apposed aspartic acid residues. Post-translationally, initially, virus-like particles (VLPs) are composed of the structural unprocessed proteins Gag and Gag-Pol, and also contain the host initiator methionine tRNA (tRNA(i)-Met) which serves as a primer for minus-strand DNA synthesis, and a dimer of genomic Ty RNA. Processing of the polyproteins occurs within the particle and proceeds by an ordered pathway, called maturation. First, the protease (PR) is released by autocatalytic cleavage of the Gag-Pol polyprotein yielding capsid protein p45 and a Pol-p154 precursor protein. This cleavage is a prerequisite for subsequent processing of Pol-p154 at the remaining sites to release the mature structural and catalytic proteins. Maturation takes place prior to the RT reaction and is required to produce transposition-competent VLPs.

It localises to the cytoplasm. The protein localises to the nucleus. It carries out the reaction DNA(n) + a 2'-deoxyribonucleoside 5'-triphosphate = DNA(n+1) + diphosphate. It catalyses the reaction Endonucleolytic cleavage to 5'-phosphomonoester.. In terms of biological role, capsid protein (CA) is the structural component of the virus-like particle (VLP), forming the shell that encapsulates the retrotransposons dimeric RNA genome. The particles are assembled from trimer-clustered units and there are holes in the capsid shells that allow for the diffusion of macromolecules. CA also has nucleocapsid-like chaperone activity, promoting primer tRNA(i)-Met annealing to the multipartite primer-binding site (PBS), dimerization of Ty1 RNA and initiation of reverse transcription. Its function is as follows. The aspartyl protease (PR) mediates the proteolytic cleavages of the Gag and Gag-Pol polyproteins after assembly of the VLP. Functionally, reverse transcriptase/ribonuclease H (RT) is a multifunctional enzyme that catalyzes the conversion of the retro-elements RNA genome into dsDNA within the VLP. The enzyme displays a DNA polymerase activity that can copy either DNA or RNA templates, and a ribonuclease H (RNase H) activity that cleaves the RNA strand of RNA-DNA heteroduplexes during plus-strand synthesis and hydrolyzes RNA primers. The conversion leads to a linear dsDNA copy of the retrotransposon that includes long terminal repeats (LTRs) at both ends. Integrase (IN) targets the VLP to the nucleus, where a subparticle preintegration complex (PIC) containing at least integrase and the newly synthesized dsDNA copy of the retrotransposon must transit the nuclear membrane. Once in the nucleus, integrase performs the integration of the dsDNA into the host genome. The chain is Transposon Ty1-GR1 Gag-Pol polyprotein (TY1B-GR1) from Saccharomyces cerevisiae (strain ATCC 204508 / S288c) (Baker's yeast).